A 440-amino-acid polypeptide reads, in one-letter code: Collagen alpha-1(XXVI) chain (440 aa).

The first 20 residues, 1 to 20 (MKLVLLLPWACCCLCGSALA), serve as a signal peptide directing secretion. An EMI domain is found at 52–128 (RRHWCHHTVT…PGFTGSNCEE (77 aa)). Disulfide bonds link Cys-56–Cys-118, Cys-83–Cys-89, and Cys-117–Cys-126. The N-linked (GlcNAc...) asparagine glycan is linked to Asn-70. An N-linked (GlcNAc...) asparagine glycan is attached at Asn-132. Disordered stretches follow at residues 157–362 (EQPS…EGEG) and 390–440 (LASP…GDRK). Positions 199-267 (GPAGPPGQMG…PGPAGSPGLL (69 aa)) constitute a Collagen-like 1 domain. Composition is skewed to pro residues over residues 200 to 215 (PAGP…PAGP), 231 to 243 (VGPP…PGPR), and 252 to 261 (PGPPGPPGPA). The span at 269–281 (NTPQGVLYSLQTP) shows a compositional bias: polar residues. The 33-residue stretch at 302-334 (GIPGPRGPPGPPGPPGPHGPPGPPGAPGSQGLV) folds into the Collagen-like 2 domain. A compositionally biased stretch (pro residues) spans 306–327 (PRGPPGPPGPPGPHGPPGPPGA). The segment covering 347 to 356 (SVKEEEDKAS) has biased composition (basic and acidic residues).

In terms of assembly, homotrimer or heterotrimer. In terms of processing, hydroxylated on proline residues. Post-translationally, N-glycosylated. In terms of tissue distribution, specifically expressed in the testis and ovary in adult tissues.

It is found in the secreted. Its subcellular location is the extracellular space. The protein resides in the extracellular matrix. The protein is Collagen alpha-1(XXVI) chain (Col26a1) of Mus musculus (Mouse).